The chain runs to 148 residues: Flavodoxin (148 aa).

Residues 4–145 (VLIVYGSTTG…DVSAWAGRVV (142 aa)) form the Flavodoxin-like domain.

The protein belongs to the flavodoxin family. The cofactor is FMN.

In terms of biological role, low-potential electron donor to a number of redox enzymes. This Nitratidesulfovibrio vulgaris (strain DSM 19637 / Miyazaki F) (Desulfovibrio vulgaris) protein is Flavodoxin.